The sequence spans 390 residues: Probable purine permease 7 (390 aa).

The next 10 membrane-spanning stretches (helical) occupy residues 42–62 (WLRVSIYVIFVLFCQPLATIL), 74–94 (TYVVTLLQLIGFPVLVLFRFF), 110–130 (SPSFTTLASVYLCTGLLVSAY), 131–151 (AYLSAVGLLYLPVSTFSLILA), 169–189 (FTPLIVSSLLLLTVSSALLVV), 205–225 (VIGFICTIGASAGIGLLLSLI), 244–264 (LAIYQSLVASCVVLIGLFASG), 286–306 (TLASAAISWQVYTLGLVGLIF), 312–332 (FSNSITAVGLPIVPVAAVIVF), and 341–361 (IFSIILAICGFLSFVYQHYLD).

It belongs to the purine permeases (TC 2.A.7.14) family.

It localises to the membrane. The sequence is that of Probable purine permease 7 (PUP7) from Arabidopsis thaliana (Mouse-ear cress).